Reading from the N-terminus, the 316-residue chain is Ribosomal protein L11 methyltransferase (316 aa).

The S-adenosyl-L-methionine site is built by threonine 162, glycine 183, aspartate 205, and asparagine 248.

This sequence belongs to the methyltransferase superfamily. PrmA family.

The protein resides in the cytoplasm. The catalysed reaction is L-lysyl-[protein] + 3 S-adenosyl-L-methionine = N(6),N(6),N(6)-trimethyl-L-lysyl-[protein] + 3 S-adenosyl-L-homocysteine + 3 H(+). Its function is as follows. Methylates ribosomal protein L11. The chain is Ribosomal protein L11 methyltransferase from Levilactobacillus brevis (strain ATCC 367 / BCRC 12310 / CIP 105137 / JCM 1170 / LMG 11437 / NCIMB 947 / NCTC 947) (Lactobacillus brevis).